The sequence spans 350 residues: Adenine deaminase (350 aa).

Zn(2+) is bound by residues histidine 24, histidine 26, and histidine 207. Catalysis depends on glutamate 210, which acts as the Proton donor. Aspartate 288 contacts Zn(2+). Substrate is bound at residue aspartate 289.

The protein belongs to the metallo-dependent hydrolases superfamily. Adenosine and AMP deaminases family. Adenine deaminase type 2 subfamily. The cofactor is Zn(2+).

The enzyme catalyses adenine + H2O + H(+) = hypoxanthine + NH4(+). Catalyzes the hydrolytic deamination of adenine to hypoxanthine. Plays an important role in the purine salvage pathway and in nitrogen catabolism. The sequence is that of Adenine deaminase from Paraburkholderia xenovorans (strain LB400).